A 393-amino-acid polypeptide reads, in one-letter code: Methylthioribose kinase (393 aa).

ATP-binding positions include Asn-38, Lys-53, and 107–109 (EDL). Asp-225 contributes to the substrate binding site. Residue 242–244 (DPE) participates in ATP binding. Arg-332 is a substrate binding site.

It belongs to the methylthioribose kinase family. In terms of assembly, homodimer.

The catalysed reaction is 5-(methylsulfanyl)-D-ribose + ATP = 5-(methylsulfanyl)-alpha-D-ribose 1-phosphate + ADP + H(+). It participates in amino-acid biosynthesis; L-methionine biosynthesis via salvage pathway; S-methyl-5-thio-alpha-D-ribose 1-phosphate from S-methyl-5'-thioadenosine (hydrolase route): step 2/2. Catalyzes the phosphorylation of methylthioribose into methylthioribose-1-phosphate. The protein is Methylthioribose kinase of Bacillus thuringiensis subsp. konkukian (strain 97-27).